The following is a 294-amino-acid chain: 33 kDa chaperonin (294 aa).

2 disulfide bridges follow: Cys235–Cys237 and Cys268–Cys271.

The protein belongs to the HSP33 family. In terms of processing, under oxidizing conditions two disulfide bonds are formed involving the reactive cysteines. Under reducing conditions zinc is bound to the reactive cysteines and the protein is inactive.

The protein resides in the cytoplasm. Functionally, redox regulated molecular chaperone. Protects both thermally unfolding and oxidatively damaged proteins from irreversible aggregation. Plays an important role in the bacterial defense system toward oxidative stress. The protein is 33 kDa chaperonin of Proteus mirabilis (strain HI4320).